Consider the following 225-residue polypeptide: MDKRISIAIDGPAAAGKSTVAKVVAKKLSYVYIDTGAMYRTITYAALEQKVDIENEEQLMEVVKNVKIEFQQGENTQLVFLNGQDVSEVIRTPEVTNRVSIVAKHRLVREEMVRRQQELAEKGGVVMDGRDIGTHVLPDAEVKIFMLASVEERAERRHLENMNKGFDSNLEQLKEEIAQRDKLDSEREVSPLKKADDALELDTTSLSIEEVVQKIMGIVSGVFAK.

11-19 (GPAAAGKST) lines the ATP pocket.

The protein belongs to the cytidylate kinase family. Type 1 subfamily.

The protein localises to the cytoplasm. It catalyses the reaction CMP + ATP = CDP + ADP. The catalysed reaction is dCMP + ATP = dCDP + ADP. This is Cytidylate kinase from Bacillus cereus (strain AH187).